Reading from the N-terminus, the 451-residue chain is UDP-glycosyltransferase 76E11 (451 aa).

Residues serine 273, 332-334, 349-357, and 371-374 contribute to the UDP-alpha-D-glucose site; these read APQ, HCGWNSTLE, and SSDQ.

Belongs to the UDP-glycosyltransferase family.

In terms of biological role, possesses low quercetin 3-O-glucosyltransferase and 7-O-glucosyltransferase activities in vitro. This is UDP-glycosyltransferase 76E11 (UGT76E11) from Arabidopsis thaliana (Mouse-ear cress).